A 143-amino-acid chain; its full sequence is Transcriptional regulator MraZ (143 aa).

2 consecutive SpoVT-AbrB domains span residues Thr5–Glu47 and Thr76–Ala119.

The protein belongs to the MraZ family. As to quaternary structure, forms oligomers.

It is found in the cytoplasm. Its subcellular location is the nucleoid. This Mycobacterium sp. (strain JLS) protein is Transcriptional regulator MraZ.